Here is a 445-residue protein sequence, read N- to C-terminus: Phosphoglucosamine mutase (445 aa).

S102 functions as the Phosphoserine intermediate in the catalytic mechanism. Residues S102, D241, D243, and D245 each coordinate Mg(2+). S102 is subject to Phosphoserine.

It belongs to the phosphohexose mutase family. The cofactor is Mg(2+). Activated by phosphorylation.

The enzyme catalyses alpha-D-glucosamine 1-phosphate = D-glucosamine 6-phosphate. Its function is as follows. Catalyzes the conversion of glucosamine-6-phosphate to glucosamine-1-phosphate. The polypeptide is Phosphoglucosamine mutase (Escherichia coli O157:H7).